The sequence spans 509 residues: ATP synthase subunit alpha (509 aa).

An ATP-binding site is contributed by 169–176 (GDRQTGKT).

The protein belongs to the ATPase alpha/beta chains family. As to quaternary structure, F-type ATPases have 2 components, CF(1) - the catalytic core - and CF(0) - the membrane proton channel. CF(1) has five subunits: alpha(3), beta(3), gamma(1), delta(1), epsilon(1). CF(0) has three main subunits: a(1), b(2) and c(9-12). The alpha and beta chains form an alternating ring which encloses part of the gamma chain. CF(1) is attached to CF(0) by a central stalk formed by the gamma and epsilon chains, while a peripheral stalk is formed by the delta and b chains.

The protein localises to the cell inner membrane. The catalysed reaction is ATP + H2O + 4 H(+)(in) = ADP + phosphate + 5 H(+)(out). Produces ATP from ADP in the presence of a proton gradient across the membrane. The alpha chain is a regulatory subunit. In Rhizobium etli (strain ATCC 51251 / DSM 11541 / JCM 21823 / NBRC 15573 / CFN 42), this protein is ATP synthase subunit alpha.